The primary structure comprises 338 residues: Phenylalanine--tRNA ligase alpha subunit (338 aa).

Glu259 is a binding site for Mg(2+).

It belongs to the class-II aminoacyl-tRNA synthetase family. Phe-tRNA synthetase alpha subunit type 1 subfamily. Tetramer of two alpha and two beta subunits. It depends on Mg(2+) as a cofactor.

Its subcellular location is the cytoplasm. It carries out the reaction tRNA(Phe) + L-phenylalanine + ATP = L-phenylalanyl-tRNA(Phe) + AMP + diphosphate + H(+). This chain is Phenylalanine--tRNA ligase alpha subunit, found in Herminiimonas arsenicoxydans.